Reading from the N-terminus, the 446-residue chain is Baeyer-Villiger oxidase mdpL (446 aa).

The protein belongs to the AflY oxidoreductase family. NADPH serves as cofactor.

It participates in secondary metabolite biosynthesis. Functionally, baeyer-Villiger oxidase; part of the gene cluster that mediates the biosynthesis of monodictyphenone, a prenyl xanthone derivative. The pathway begins with the synthesis of atrochrysone thioester by the polyketide synthase (PKS) mdpG. The atrochrysone carboxyl ACP thioesterase mdpF then breaks the thioester bond and releases the atrochrysone carboxylic acid from mdpG. The atrochrysone carboxylic acid is then converted to atrochrysone which is further transformed into emodin anthrone. The next step is performed by the anthrone oxygenase mdpH that catalyzes the oxidation of emodinanthrone to emodin. Emodin is further modified to yield monodictyphenone via several steps involving mdpB, mdpC mdpJ, mdpK and mdpL. These enzymes with xptA, xptB and xptC are also proposed to be involved in the synthesis of shamixanthone from emodin. Especially, direct reduction of emodin by the short chain dehydrogenase mdpC followed by dehydration catalyzed by the scytalone dehydratase-like protein mdpB gives loss of oxygen and formation of chrysophanol intermediate in two simple steps. In Emericella nidulans (strain FGSC A4 / ATCC 38163 / CBS 112.46 / NRRL 194 / M139) (Aspergillus nidulans), this protein is Baeyer-Villiger oxidase mdpL.